The primary structure comprises 501 residues: MDLVLLEKALLGLFAAAVLAVAVAKLTGKRYRLPPGPAGAPVVGNWLQVGDDLNHRNLMSLAKRFGDIFLLRMGVRNLVVVSTPELAKEVLHTQGVEFGSRTRNVVFDIFTGKGQDMVFTVYGDHWRKMRRIMTVPFFTNKVVAQNRVGWEEEARLVVEDVRKDPRAAAEGVVIRRRLQLMMYNDMFRIMFDTRFESEQDPLFNKLKALNAERSRLSQSFEYNYGDFIPVLRPFLRGYLNRCHDLKTRRMKVFEDNFVQERKKVMAQTGEIRCAMDHILEAERKGEINHDNVLYIVENINVAAIETTLWSIEWGIAELVNHPAIQSKLREEMDSVLGAGVPVTEPDLERLPYLQAIVKETLRLRMAIPLLVPHMNLNDGKLAGYDIPAESKILVNAWFLANDPKRWVRPDEFRPERFLEEEKTVEAHGNDFRFVPFGVGRRSCPGIILALPIIGITLGRLVQNFQLLPPPGQDKIDTTEKPGQFSNQIAKHATIVCKPLEA.

A helical transmembrane segment spans residues Leu3 to Val23. (E)-cinnamate-binding positions include Arg213–Gln218 and Ala302. Cys443 serves as a coordination point for heme.

This sequence belongs to the cytochrome P450 family. Heme is required as a cofactor.

The protein localises to the membrane. It carries out the reaction (E)-cinnamate + reduced [NADPH--hemoprotein reductase] + O2 = (E)-4-coumarate + oxidized [NADPH--hemoprotein reductase] + H2O + H(+). It participates in phenylpropanoid metabolism; trans-4-coumarate biosynthesis; trans-4-coumarate from trans-cinnamate: step 1/1. Functionally, catalyzes the first oxidative step of the phenylpropanoid pathway in higher plants by transforming trans-cinnamate into p-coumarate. The compounds formed by this pathway are essential components for lignification, pollination, and defense against ultraviolet light, predators and pathogens. Can also use 2-naphthoic acid as substrate. The protein is Trans-cinnamate 4-monooxygenase of Sorghum bicolor (Sorghum).